Reading from the N-terminus, the 101-residue chain is Signal recognition particle 19 kDa protein (101 aa).

Belongs to the SRP19 family. As to quaternary structure, part of the signal recognition particle protein translocation system, which is composed of SRP and FtsY. Archaeal SRP consists of a 7S RNA molecule of 300 nucleotides and two protein subunits: SRP54 and SRP19.

The protein localises to the cytoplasm. Functionally, involved in targeting and insertion of nascent membrane proteins into the cytoplasmic membrane. Binds directly to 7S RNA and mediates binding of the 54 kDa subunit of the SRP. In Methanosarcina acetivorans (strain ATCC 35395 / DSM 2834 / JCM 12185 / C2A), this protein is Signal recognition particle 19 kDa protein.